A 262-amino-acid chain; its full sequence is Matrilysin (262 aa).

An N-terminal signal peptide occupies residues 1–12 (LCVLCLLPQSPA). A propeptide spans 13-89 (LPLPREAGGH…PRCGLPDTGE (77 aa)) (activation peptide). Positions 80-87 (PRCGLPDT) match the Cysteine switch motif. C82 provides a ligand contact to Zn(2+). D148 contacts Ca(2+). Positions 158 and 160 each coordinate Zn(2+). Residues D165, G166, G168, and T170 each contribute to the Ca(2+) site. H173 serves as a coordination point for Zn(2+). Residues G180, G182, and D184 each coordinate Ca(2+). H186 lines the Zn(2+) pocket. D188 and E191 together coordinate Ca(2+). H209 lines the Zn(2+) pocket. E210 is a catalytic residue. Zn(2+) is bound by residues H213 and H219.

This sequence belongs to the peptidase M10A family. Requires Ca(2+) as cofactor. It depends on Zn(2+) as a cofactor.

The protein resides in the secreted. It localises to the extracellular space. Its subcellular location is the extracellular matrix. The enzyme catalyses Cleavage of 14-Ala-|-Leu-15 and 16-Tyr-|-Leu-17 in B chain of insulin. No action on collagen types I, II, IV, V. Cleaves gelatin chain alpha2(I) &gt; alpha1(I).. Functionally, degrades casein, gelatins of types I, III, IV, and V, and fibronectin. Activates procollagenase. This is Matrilysin (MMP7) from Felis catus (Cat).